The primary structure comprises 678 residues: Zinc finger translocation-associated protein (678 aa).

Disordered regions lie at residues M1 to D100, G174 to G250, L333 to R413, and P493 to P583. The span at P66–R78 shows a compositional bias: low complexity. The span at K79–A88 shows a compositional bias: basic and acidic residues. Residues A187–G200 show a composition bias toward acidic residues. Residues A205 to A214 show a composition bias toward low complexity. K375 is covalently cross-linked (Glycyl lysine isopeptide (Lys-Gly) (interchain with G-Cter in SUMO2)). Over residues P493 to E509 the composition is skewed to low complexity. Acidic residues-rich tracts occupy residues G512 to W524 and A539 to Q549. Over residues P557–P572 the composition is skewed to pro residues. Residues R573–P583 are compositionally biased toward basic and acidic residues.

The protein is Zinc finger translocation-associated protein of Mus musculus (Mouse).